Reading from the N-terminus, the 326-residue chain is Homocysteine S-methyltransferase 1 (326 aa).

Residues 9 to 323 (LLEDLIKKCG…STINAISRDL (315 aa)) form the Hcy-binding domain. Positions 241, 308, and 309 each coordinate Zn(2+).

Monomer. It depends on Zn(2+) as a cofactor. As to expression, expressed predominantly in roots. Expressed in rosette leaves, cauline leaves and developing seeds.

It carries out the reaction S-methyl-L-methionine + L-homocysteine = 2 L-methionine + H(+). With respect to regulation, strongly inhibited by methionine. Its function is as follows. Catalyzes methyl transfer from S-methylmethionine (SMM) to adenosyl-L-homocysteine (AdoMet). SMM degradation (by HMT-1, HMT-2 and HMT-3) and biosynthesis (by MMT1) constitute the SMM cycle in plants, which is probably required to achieve short term control of AdoMet level. The polypeptide is Homocysteine S-methyltransferase 1 (HMT-1) (Arabidopsis thaliana (Mouse-ear cress)).